The chain runs to 185 residues: CASP-like protein 2C2 (185 aa).

At 1–22 (MAAAARVSEVKAEGLLRGACTA) the chain is on the cytoplasmic side. The helical transmembrane segment at 23–43 (LAAAAALLVGLSTQTETVLLV) threads the bilayer. The Extracellular segment spans residues 44–53 (RKKATVKDVQ). The chain crosses the membrane as a helical span at residues 54 to 74 (ALWVLAMAAAAAAGYHLLQLL). Residues 75 to 104 (KCLYLGRVGGARPCRRSSRALAWTCLLLDK) lie on the Cytoplasmic side of the membrane. A helical transmembrane segment spans residues 105-125 (ACAYTTFATTVAAAQACVVAL). Residues 126-146 (DGAHALQWTKLCNIYTRFCEQ) lie on the Extracellular side of the membrane. Residues 147–167 (VAGSLVLGMLAAVGTAVLSAA) form a helical membrane-spanning segment. Residues 168 to 185 (SARNVFRHYASLETYAAH) lie on the Cytoplasmic side of the membrane.

This sequence belongs to the Casparian strip membrane proteins (CASP) family. As to quaternary structure, homodimer and heterodimers.

Its subcellular location is the cell membrane. In Zea mays (Maize), this protein is CASP-like protein 2C2.